The chain runs to 418 residues: Tyrosine--tRNA ligase 1 (418 aa).

Tyr-34 is a binding site for L-tyrosine. The 'HIGH' region signature appears at 39–48 (PTADSLHLGH). L-tyrosine contacts are provided by Tyr-169 and Gln-173. A 'KMSKS' region motif is present at residues 229 to 233 (KFGKS). Lys-232 is a binding site for ATP. Residues 352–418 (LNIVELLVNA…GKKKNFVLTY (67 aa)) enclose the S4 RNA-binding domain.

It belongs to the class-I aminoacyl-tRNA synthetase family. TyrS type 1 subfamily. In terms of assembly, homodimer.

It localises to the cytoplasm. The catalysed reaction is tRNA(Tyr) + L-tyrosine + ATP = L-tyrosyl-tRNA(Tyr) + AMP + diphosphate + H(+). In terms of biological role, catalyzes the attachment of tyrosine to tRNA(Tyr) in a two-step reaction: tyrosine is first activated by ATP to form Tyr-AMP and then transferred to the acceptor end of tRNA(Tyr). The protein is Tyrosine--tRNA ligase 1 of Streptococcus thermophilus (strain CNRZ 1066).